The primary structure comprises 77 residues: Acyl carrier protein (77 aa).

One can recognise a Carrier domain in the interval 2–77; sequence ADVLERVTKI…DAVTYIESHL (76 aa). O-(pantetheine 4'-phosphoryl)serine is present on S37.

Belongs to the acyl carrier protein (ACP) family. Post-translationally, 4'-phosphopantetheine is transferred from CoA to a specific serine of apo-ACP by AcpS. This modification is essential for activity because fatty acids are bound in thioester linkage to the sulfhydryl of the prosthetic group.

The protein resides in the cytoplasm. It functions in the pathway lipid metabolism; fatty acid biosynthesis. Its function is as follows. Carrier of the growing fatty acid chain in fatty acid biosynthesis. This Bacillus mycoides (strain KBAB4) (Bacillus weihenstephanensis) protein is Acyl carrier protein.